The following is a 99-amino-acid chain: Cystatin (99 aa).

The Cystatin domain maps to 3-99 (GGLSPRSVSD…EEKLCGFQVW (97 aa)). The short motif at 47–51 (QSVAG) is the Secondary area of contact element. C65 and C81 form a disulfide bridge.

The protein belongs to the cystatin family. In terms of tissue distribution, expressed by the venom gland.

It is found in the secreted. In terms of biological role, inhibits various C1 cysteine proteases including cathepsin L (Ki is 0.1 nM), papain (Ki is 0.19 nM), cathepsin S (Ki is 1.2 nM), and cathepsin B (Ki is 2.5 nM). This protein has no toxic activity and its function in the venom is unknown. It may play a role as housekeeping or regulatory protein. The chain is Cystatin from Naja atra (Chinese cobra).